Here is a 184-residue protein sequence, read N- to C-terminus: Large ribosomal subunit protein uL5c (184 aa).

Belongs to the universal ribosomal protein uL5 family. In terms of assembly, part of the 50S ribosomal subunit; contacts the 5S rRNA.

Its subcellular location is the plastid. The protein resides in the chloroplast. Binds 5S rRNA, forms part of the central protuberance of the 50S subunit. The protein is Large ribosomal subunit protein uL5c (rpl5) of Ostreococcus tauri.